We begin with the raw amino-acid sequence, 203 residues long: SPbeta prophage-derived uncharacterized protein YouA (203 aa).

The segment at 1-23 is disordered; sequence MAFLNQDGDKYTSAKDDGTGNPI. Residues 7-18 are compositionally biased toward basic and acidic residues; sequence DGDKYTSAKDDG.

This Bacillus subtilis (strain 168) protein is SPbeta prophage-derived uncharacterized protein YouA (youA).